A 556-amino-acid polypeptide reads, in one-letter code: Testis-specific protein 10-interacting protein (556 aa).

Positions 1–16 (MGQDTDMLNTYQQLVR) are enriched in polar residues. Disordered stretches follow at residues 1–31 (MGQDTDMLNTYQQLVRTPSVRPGQDVRLQAP), 50–102 (GCLG…LLPR), 123–155 (LQPSSPTPGHQALPMPSSFSQRQSRRKSTANLP), and 179–309 (GGVS…QWRK). Residues 208 to 219 (GSASDKQVQLQS) are compositionally biased toward polar residues. The segment covering 244–258 (SEEEQFSEATEEAEE) has biased composition (acidic residues). Residues 289–301 (QGQSQGSSPSFNN) are compositionally biased toward polar residues. A coiled-coil region spans residues 379–464 (RQEATRSLLQ…LQGIQHRVQA (86 aa)). A disordered region spans residues 503 to 556 (AGKVDREGTPRKPRSHRSMGVRMEHSPQRPPRTEPTGSQPDRHYNPSLDPECSP).

In Homo sapiens (Human), this protein is Testis-specific protein 10-interacting protein (TSGA10IP).